We begin with the raw amino-acid sequence, 258 residues long: tRNA (guanine-N(1)-)-methyltransferase (258 aa).

S-adenosyl-L-methionine-binding positions include glycine 122 and 142–147 (LGDFVL).

The protein belongs to the RNA methyltransferase TrmD family. As to quaternary structure, homodimer.

Its subcellular location is the cytoplasm. It catalyses the reaction guanosine(37) in tRNA + S-adenosyl-L-methionine = N(1)-methylguanosine(37) in tRNA + S-adenosyl-L-homocysteine + H(+). Specifically methylates guanosine-37 in various tRNAs. The chain is tRNA (guanine-N(1)-)-methyltransferase from Hahella chejuensis (strain KCTC 2396).